The sequence spans 200 residues: ATP-dependent Clp protease proteolytic subunit 1 (200 aa).

Ser-98 acts as the Nucleophile in catalysis. His-123 is a catalytic residue.

The protein belongs to the peptidase S14 family. As to quaternary structure, fourteen ClpP subunits assemble into 2 heptameric rings which stack back to back to give a disk-like structure with a central cavity, resembling the structure of eukaryotic proteasomes.

The protein localises to the cytoplasm. It carries out the reaction Hydrolysis of proteins to small peptides in the presence of ATP and magnesium. alpha-casein is the usual test substrate. In the absence of ATP, only oligopeptides shorter than five residues are hydrolyzed (such as succinyl-Leu-Tyr-|-NHMec, and Leu-Tyr-Leu-|-Tyr-Trp, in which cleavage of the -Tyr-|-Leu- and -Tyr-|-Trp bonds also occurs).. Its function is as follows. Cleaves peptides in various proteins in a process that requires ATP hydrolysis. Has a chymotrypsin-like activity. Plays a major role in the degradation of misfolded proteins. The polypeptide is ATP-dependent Clp protease proteolytic subunit 1 (Mycobacterium bovis (strain ATCC BAA-935 / AF2122/97)).